A 58-amino-acid chain; its full sequence is Proteinase inhibitor PSKP-1 (58 aa).

In terms of domain architecture, Kazal-like spans 1–58 (VIEPKCYKYEGKKCPPDINPVCGTDKRTYYNECALCVFIRQSTKKADKAIKIKKWGKC). 3 disulfides stabilise this stretch: cysteine 6–cysteine 36, cysteine 14–cysteine 33, and cysteine 22–cysteine 58.

As to quaternary structure, monomer. Skin.

It localises to the secreted. Has antibacterial activity against Gram-negative bacterium E.coli ATCC 11229. Shows hemagglutinating activity. Inhibits prolyl endopeptidase, but not trypsin, chymotrypsin, V8 protease and proteinase K. May have a role in mucosal defense against microbes by interacting directly with their membranes. The sequence is that of Proteinase inhibitor PSKP-1 from Phyllomedusa sauvagei (Sauvage's leaf frog).